The following is a 129-amino-acid chain: Small ribosomal subunit protein uS11 (129 aa).

As to quaternary structure, part of the 30S ribosomal subunit. Interacts with proteins S7 and S18. Binds to IF-3. In terms of processing, may be methylated on an undetermined residue.

Located on the platform of the 30S subunit, it bridges several disparate RNA helices of the 16S rRNA. Forms part of the Shine-Dalgarno cleft in the 70S ribosome. The chain is Small ribosomal subunit protein uS11 from Rhodopseudomonas palustris (strain ATCC BAA-98 / CGA009).